The primary structure comprises 100 residues: DNA base-flipping protein (100 aa).

This sequence belongs to the MGMT family. ATL subfamily.

Functionally, involved in DNA damage recognition. Binds DNA containing O(6)-methylguanine. Binds to the damaged base and flips the base out of the DNA duplex into an extrahelical conformation, which allows processing by repair proteins. This is DNA base-flipping protein from Vibrio parahaemolyticus serotype O3:K6 (strain AQ3810).